The chain runs to 647 residues: A-type voltage-gated potassium channel KCND1 (647 aa).

The Cytoplasmic portion of the chain corresponds to 1-183 (MAAGVATWLP…RAFENPHTST (183 aa)). Residues 2 to 20 (AAGVATWLPFARAAAVGWL) are interaction with KCNIP1, KCNIP2, and other family members. Zn(2+) contacts are provided by His-104, Cys-131, and Cys-132. The interval 144-164 (AQRLAEDEEAEQTGDGPALPA) is disordered. Residues 184-205 (AALVFYYVTGFFIAVSVIANVV) traverse the membrane as a helical segment. Residues 206–230 (ETIPCRGPARRPPREQPCGDRFPLA) are Extracellular-facing. Residues 231–252 (FFCMDTACVLIFTGEYLLRLFA) traverse the membrane as a helical segment. Residues 253-263 (APSRCRFLRSV) are Cytoplasmic-facing. Residues 264–284 (MSLIDVVAILPYYIGLLVPKN) traverse the membrane as a helical segment. The Extracellular portion of the chain corresponds to 285–287 (EDV). The helical; Voltage-sensor transmembrane segment at 288–308 (SGAFVTLRVFRVFRIFKFSRH) threads the bilayer. At 309-323 (SQGLRILGYTLKSCA) the chain is on the cytoplasmic side. Residues 310-323 (QGLRILGYTLKSCA) are S4-S5 linker. The helical transmembrane segment at 324 to 345 (SELGFLLFSLTMAIIIFATVMF) threads the bilayer. Residues 346–359 (YAEKGTSKTNFTSI) are Extracellular-facing. Positions 360-371 (PAAFWYTIVTMT) form an intramembrane region, helical. A Selectivity filter motif is present at residues 372–377 (TLGYGD). An intramembrane segment occupies 372 to 379 (TLGYGDMV). Residues 380–386 (PSTIAGK) lie on the Extracellular side of the membrane. The helical transmembrane segment at 387–415 (IFGSICSLSGVLVIALPVPVIVSNFSRIY) threads the bilayer. At 416-647 (HQNQRADKRR…LPETVKISSL (232 aa)) the chain is on the cytoplasmic side. The required for dendritic targeting stretch occupies residues 474–489 (FEQQHHHLLHCLEKTT). A compositionally biased stretch (low complexity) spans 510 to 520 (GRTSRSTSVSS). The disordered stretch occupies residues 510–531 (GRTSRSTSVSSQPVGPSSLLSS). Polar residues predominate over residues 521-530 (QPVGPSSLLS). Residue Ser-555 is modified to Phosphoserine. Disordered regions lie at residues 564 to 584 (GLRR…PHDS) and 601 to 634 (IPTP…RLGT).

Belongs to the potassium channel family. D (Shal) (TC 1.A.1.2) subfamily. Kv4.1/KCND1 sub-subfamily. As to quaternary structure, component of heteromultimeric potassium channels. Identified in potassium channel complexes containing KCND1, KCND2, KCND3, KCNIP1, KCNIP2, KCNIP3, KCNIP4, DPP6 and DPP10. As to expression, detected in carotid body chemoreceptor cells and in frontal cortex.

It is found in the cell membrane. It catalyses the reaction K(+)(in) = K(+)(out). In terms of biological role, A-type voltage-gated potassium channel that mediates transmembrane potassium transport in excitable membranes in the brain. Mediates A-type current I(SA) in suprachiasmatic nucleus (SCN) neurons. Exhibits a low-threshold A-type current with a hyperpolarized steady-state inactivation midpoint and the recovery process was steeply voltage-dependent, with recovery being markedly faster at more negative potentials. May regulates repetitive firing rates in the suprachiasmatic nucleus (SCN) neurons and circadian rhythms in neuronal excitability and behavior. Contributes to the regulation of the circadian rhythm of action potential firing in suprachiasmatic nucleus neurons, which regulates the circadian rhythm of locomotor activity. The regulatory subunit KCNIP1 modulates the kinetics of channel inactivation, increases the current amplitudes and accelerates recovery from inactivation, shifts activation in a depolarizing direction. The regulatory subunit DPP10 decreases the voltage sensitivity of the inactivation channel gating. The polypeptide is A-type voltage-gated potassium channel KCND1 (Oryctolagus cuniculus (Rabbit)).